Consider the following 289-residue polypeptide: Phosphatidylserine decarboxylase proenzyme (289 aa).

Residues Asp92, His149, and Ser254 each act as charge relay system; for autoendoproteolytic cleavage activity in the active site. The active-site Schiff-base intermediate with substrate; via pyruvic acid; for decarboxylase activity is the Ser254. A Pyruvic acid (Ser); by autocatalysis modification is found at Ser254.

This sequence belongs to the phosphatidylserine decarboxylase family. PSD-B subfamily. Prokaryotic type I sub-subfamily. Heterodimer of a large membrane-associated beta subunit and a small pyruvoyl-containing alpha subunit. Pyruvate serves as cofactor. Is synthesized initially as an inactive proenzyme. Formation of the active enzyme involves a self-maturation process in which the active site pyruvoyl group is generated from an internal serine residue via an autocatalytic post-translational modification. Two non-identical subunits are generated from the proenzyme in this reaction, and the pyruvate is formed at the N-terminus of the alpha chain, which is derived from the carboxyl end of the proenzyme. The autoendoproteolytic cleavage occurs by a canonical serine protease mechanism, in which the side chain hydroxyl group of the serine supplies its oxygen atom to form the C-terminus of the beta chain, while the remainder of the serine residue undergoes an oxidative deamination to produce ammonia and the pyruvoyl prosthetic group on the alpha chain. During this reaction, the Ser that is part of the protease active site of the proenzyme becomes the pyruvoyl prosthetic group, which constitutes an essential element of the active site of the mature decarboxylase.

It localises to the cell membrane. It carries out the reaction a 1,2-diacyl-sn-glycero-3-phospho-L-serine + H(+) = a 1,2-diacyl-sn-glycero-3-phosphoethanolamine + CO2. Its pathway is phospholipid metabolism; phosphatidylethanolamine biosynthesis; phosphatidylethanolamine from CDP-diacylglycerol: step 2/2. Catalyzes the formation of phosphatidylethanolamine (PtdEtn) from phosphatidylserine (PtdSer). The sequence is that of Phosphatidylserine decarboxylase proenzyme from Pseudomonas paraeruginosa (strain DSM 24068 / PA7) (Pseudomonas aeruginosa (strain PA7)).